The following is a 281-amino-acid chain: Cell growth regulator with EF hand domain protein 1 (281 aa).

The N-terminal stretch at 1-21 (MSRWLMQMLMLPLLLLPLGQA) is a signal peptide. 2 EF-hand domains span residues 71 to 106 (NREQ…ALAP) and 115 to 150 (PVIL…APKR). Ca(2+) contacts are provided by Asp84, Asp86, Asn88, Gln90, Glu95, Asp128, Asp130, Asp132, and Glu139. The interval 146 to 281 (EAPKRAESLP…HSIQLENDEI (136 aa)) is disordered. The span at 169-184 (LLANSPLQSETQQSLG) shows a compositional bias: polar residues. Over residues 185-213 (TKEEITSQVEAKRALEPEQEAGHHIETKV) the composition is skewed to basic and acidic residues. Phosphoserine is present on residues Ser217 and Ser228. Over residues 234-256 (GPREDAERQVESKDNEGEAKDLP) the composition is skewed to basic and acidic residues.

Probably digested extracellularly by an unknown serine protease generating extremely hydrophobic bioactive peptides. Expressed predominantly in whole brain and kidney, with limited expression in heart, lung, liver, and skeletal muscle and no expression in spleen and testis. Also expressed in pituitary gland, adrenal gland, digestive tract, and reproductive organs.

The protein resides in the secreted. Its function is as follows. Mediates cell-cell adhesion in a calcium-dependent manner. Able to inhibit growth in several cell lines. The chain is Cell growth regulator with EF hand domain protein 1 from Rattus norvegicus (Rat).